We begin with the raw amino-acid sequence, 1411 residues long: DNA-directed RNA polymerase subunit beta' (1411 aa).

Residues Cys70, Cys72, Cys85, and Cys88 each contribute to the Zn(2+) site. 3 residues coordinate Mg(2+): Asp460, Asp462, and Asp464. Zn(2+) is bound by residues Cys814, Cys889, Cys896, and Cys899. Residues 1387–1399 (RSTSSGTEITSPS) are compositionally biased toward polar residues. The disordered stretch occupies residues 1387–1411 (RSTSSGTEITSPSKDAIPLGSKVGF).

It belongs to the RNA polymerase beta' chain family. As to quaternary structure, the RNAP catalytic core consists of 2 alpha, 1 beta, 1 beta' and 1 omega subunit. When a sigma factor is associated with the core the holoenzyme is formed, which can initiate transcription. The cofactor is Mg(2+). Zn(2+) serves as cofactor.

The enzyme catalyses RNA(n) + a ribonucleoside 5'-triphosphate = RNA(n+1) + diphosphate. Functionally, DNA-dependent RNA polymerase catalyzes the transcription of DNA into RNA using the four ribonucleoside triphosphates as substrates. The polypeptide is DNA-directed RNA polymerase subunit beta' (Xylella fastidiosa (strain M12)).